The primary structure comprises 368 residues: 1-deoxy-D-xylulose 5-phosphate reductoisomerase (368 aa).

Residues Thr7, Gly8, Ser9, Ile10, Gly31, Lys32, Asn33, and Asn113 each coordinate NADPH. Lys114 is a 1-deoxy-D-xylulose 5-phosphate binding site. Residue Glu115 participates in NADPH binding. Position 133 (Asp133) interacts with Mn(2+). Ser134, Glu135, Ser158, and His181 together coordinate 1-deoxy-D-xylulose 5-phosphate. Residue Glu135 coordinates Mn(2+). Position 187 (Gly187) interacts with NADPH. 1-deoxy-D-xylulose 5-phosphate is bound by residues Ser194, Asn199, Lys200, and Glu203. Glu203 contacts Mn(2+).

Belongs to the DXR family. It depends on Mg(2+) as a cofactor. The cofactor is Mn(2+).

The catalysed reaction is 2-C-methyl-D-erythritol 4-phosphate + NADP(+) = 1-deoxy-D-xylulose 5-phosphate + NADPH + H(+). Its pathway is isoprenoid biosynthesis; isopentenyl diphosphate biosynthesis via DXP pathway; isopentenyl diphosphate from 1-deoxy-D-xylulose 5-phosphate: step 1/6. Functionally, catalyzes the NADPH-dependent rearrangement and reduction of 1-deoxy-D-xylulose-5-phosphate (DXP) to 2-C-methyl-D-erythritol 4-phosphate (MEP). This chain is 1-deoxy-D-xylulose 5-phosphate reductoisomerase, found in Helicobacter pylori (strain J99 / ATCC 700824) (Campylobacter pylori J99).